A 329-amino-acid chain; its full sequence is Oxidoreductase sirO (329 aa).

Asp-54 is an NADP(+) binding site. The active-site Proton donor is the Tyr-59. Position 118 (His-118) interacts with substrate. NADP(+) is bound by residues 148–149 (SN), Gln-174, 203–213 (SPLCCGLLINA), and 288–296 (SSARQLEES).

This sequence belongs to the aldo/keto reductase family. Aldo/keto reductase 2 subfamily.

The protein operates within mycotoxin biosynthesis. Functionally, oxidoreductase; part of the gene cluster that mediates the biosynthesis of sirodesmin PL, an epipolythiodioxopiperazine (ETP) characterized by a disulfide bridged cyclic dipeptide and that acts as a phytotoxin which is involved in the blackleg didease of canola. SirD catalyzes the O-prenylation of L-tyrosine (L-Tyr) in the presence of dimethylallyl diphosphate (DMAPP) to yield 4-O-dimethylallyl-L-Tyr, and therefore represents probably the first pathway-specific enzyme in the biosynthesis of sirodesmin PL. 4-O-dimethylallyl-L-Tyr, then undergoes condensation with L-Ser in a reaction catalyzed by the non-ribosomal peptide synthase sirP to form the diketopiperazine (DKP) backbone. Further bishydroxylation of the DKP performed by the cytochrome P450 monooxygenase sirC leads to the production of the intermediate phomamide. This step is essential to form the reactive thiol group required for toxicity of sirodesmin PL. The next steps of sirodesmin biosynthesis are not well understood yet, but some predictions could be made from intermediate compounds identification. Phomamide is converted into phomalizarine via oxidation, probably by sirT. Further oxidation, methylation (by sirM or sirN) and reduction steps convert phomalizarine to deacetyl sirodesmin. Finally, acetyltransferase sirH probably acetylates deacetyl sirodesmin to produce sirodesmin PL. The protein is Oxidoreductase sirO of Leptosphaeria maculans (Blackleg fungus).